The sequence spans 389 residues: Probable protein phosphatase 2C 47 (389 aa).

The PPM-type phosphatase domain occupies 76-346 (RSGSFADIGP…DNLTVIVVCF (271 aa)). The Mn(2+) site is built by aspartate 120, glycine 121, aspartate 294, and aspartate 337.

This sequence belongs to the PP2C family. Mg(2+) is required as a cofactor. The cofactor is Mn(2+).

It catalyses the reaction O-phospho-L-seryl-[protein] + H2O = L-seryl-[protein] + phosphate. The enzyme catalyses O-phospho-L-threonyl-[protein] + H2O = L-threonyl-[protein] + phosphate. The polypeptide is Probable protein phosphatase 2C 47 (Oryza sativa subsp. japonica (Rice)).